The primary structure comprises 433 residues: C2H2 type master regulator of conidiophore development brlA (433 aa).

Disordered stretches follow at residues 23-54 (PSEC…SMAS) and 238-268 (TFKS…RMSG). The segment covering 30–48 (TSSFSPLDSPTPTPTSLYS) has biased composition (low complexity). Over residues 238-264 (TFKSHTPSTPHRSVSMGTPSGSDTPVS) the composition is skewed to polar residues. C2H2-type zinc fingers lie at residues 321–345 (FKCK…MKSH) and 351–376 (HVCW…TKTH). The interval 391–423 (ETSQDFDPDFRGQLTPDGRPIYGSKLEDSMPDC) is disordered.

The protein localises to the nucleus. BrlA, abaA and wetA are pivotal regulators of conidiophore development and conidium maturation. They act individually and together to regulate their own expression and that of numerous other sporulation-specific genes. Binds promoters of target genes at brlA response elements (BREs) containing the conserved sequence 5'-(C/A)(A/G)AGGG(G/A)-3'. The sequence is that of C2H2 type master regulator of conidiophore development brlA from Penicillium camemberti (strain FM 013).